We begin with the raw amino-acid sequence, 143 residues long: MTYTISIRVYQTTPKGFFRPVERTNWKYANGGTWDEVRGEYVLTMGGSGTSGSLRFVSSDTDESFVATFGVHNYKRWCDIVTNLTNEQTALVINQEYYGVPIRDQARENQLTSYNVANAKGRRFAIEYTVTEGDNLKANLIIG.

Beta-D-Gal-(1-&gt;3)-alpha-D-GalNAc contacts are provided by A29, S48, G49, and N73. 3 residues coordinate N-acetyl-beta-D-glucosamine: T82, R103, and Y114.

The protein belongs to the fungal fruit body lectin family. Homotetramer.

Lectin that recognizes O-linked galactose-beta-1,3-N-acetylgalactosamine, a disaccharide (Thomsen-Friedenreich antigen or T-disaccharide), present on cell surface glycoproteins. Can also bind galactose-beta-1,3-N-acetylglucosamine. Does not bind monosaccharides. Can be internalized by clathrin-coated vesicles after binding to surface glycoproteins. After internalization it inhibits nuclear import of nuclear localization signal dependent proteins. Inhibits proliferation of malignant cells without cytotoxicity for normal cells. This is Agaricus bisporus lectin from Agaricus bisporus (White button mushroom).